The chain runs to 1106 residues: Carbamoyl phosphate synthase large chain (1106 aa).

The interval 1–402 is carboxyphosphate synthetic domain; sequence MPRRQDLNSV…ALQKAMRSLE (402 aa). ATP is bound by residues R129, R169, G175, G176, E208, I210, E215, G241, V242, H243, Q285, and E299. One can recognise an ATP-grasp 1 domain in the interval 133–328; that stretch reads KGVVERCGAE…IAKIATKLSL (196 aa). Mg(2+) is bound by residues Q285, E299, and N301. Q285, E299, and N301 together coordinate Mn(2+). The segment at 403–550 is oligomerization domain; sequence QKGSAFSFAR…YHYSSYDRET (148 aa). The carbamoyl phosphate synthetic domain stretch occupies residues 551–953; that stretch reads EVAPHEKPSV…AFAKAQAAAG (403 aa). Residues 681–872 form the ATP-grasp 2 domain; it reads ARVLTEAGLR…MAKAAALIGT (192 aa). ATP is bound by residues R717, K756, L758, E763, G788, I789, H790, S791, Q831, and E843. Mg(2+) contacts are provided by Q831, E843, and N845. Mn(2+)-binding residues include Q831, E843, and N845. The 153-residue stretch at 954 to 1106 folds into the MGS-like domain; that stretch reads GPLPTSGSLF…ERAAQEASRD (153 aa). The tract at residues 954-1106 is allosteric domain; that stretch reads GPLPTSGSLF…ERAAQEASRD (153 aa).

The protein belongs to the CarB family. As to quaternary structure, composed of two chains; the small (or glutamine) chain promotes the hydrolysis of glutamine to ammonia, which is used by the large (or ammonia) chain to synthesize carbamoyl phosphate. Tetramer of heterodimers (alpha,beta)4. It depends on Mg(2+) as a cofactor. Requires Mn(2+) as cofactor.

The catalysed reaction is hydrogencarbonate + L-glutamine + 2 ATP + H2O = carbamoyl phosphate + L-glutamate + 2 ADP + phosphate + 2 H(+). It catalyses the reaction hydrogencarbonate + NH4(+) + 2 ATP = carbamoyl phosphate + 2 ADP + phosphate + 2 H(+). It functions in the pathway amino-acid biosynthesis; L-arginine biosynthesis; carbamoyl phosphate from bicarbonate: step 1/1. Its pathway is pyrimidine metabolism; UMP biosynthesis via de novo pathway; (S)-dihydroorotate from bicarbonate: step 1/3. Functionally, large subunit of the glutamine-dependent carbamoyl phosphate synthetase (CPSase). CPSase catalyzes the formation of carbamoyl phosphate from the ammonia moiety of glutamine, carbonate, and phosphate donated by ATP, constituting the first step of 2 biosynthetic pathways, one leading to arginine and/or urea and the other to pyrimidine nucleotides. The large subunit (synthetase) binds the substrates ammonia (free or transferred from glutamine from the small subunit), hydrogencarbonate and ATP and carries out an ATP-coupled ligase reaction, activating hydrogencarbonate by forming carboxy phosphate which reacts with ammonia to form carbamoyl phosphate. In Kocuria rhizophila (strain ATCC 9341 / DSM 348 / NBRC 103217 / DC2201), this protein is Carbamoyl phosphate synthase large chain.